We begin with the raw amino-acid sequence, 560 residues long: Glutamate--tRNA ligase, chloroplastic/mitochondrial (560 aa).

47–49 (RFA) provides a ligand contact to L-glutamate. A 'HIGH' region motif is present at residues 50–60 (PSPTGNLHVGG). Residue H57 participates in ATP binding. L-glutamate is bound by residues E83, 235–239 (YNFCV), and R253. Residues E256 and 291–295 (KLSKR) each bind ATP. A 'KMSKS' region motif is present at residues 291 to 295 (KLSKR).

This sequence belongs to the class-I aminoacyl-tRNA synthetase family. Glutamate--tRNA ligase type 1 subfamily.

It is found in the plastid. Its subcellular location is the chloroplast. The protein localises to the mitochondrion. The catalysed reaction is tRNA(Glu) + L-glutamate + ATP = L-glutamyl-tRNA(Glu) + AMP + diphosphate. In terms of biological role, catalyzes the attachment of glutamate to tRNA(Glu) in a two-step reaction: glutamate is first activated by ATP to form Glu-AMP and then transferred to the acceptor end of tRNA(Glu). In Hordeum vulgare (Barley), this protein is Glutamate--tRNA ligase, chloroplastic/mitochondrial.